The chain runs to 532 residues: 56 kDa type-specific antigen (532 aa).

Positions 1 to 22 (MKKIMLIASAMSALSLPFSASA) are cleaved as a signal peptide. A helical transmembrane segment spans residues 67 to 87 (TNGLPFGGTLAAGMTIAPGFR). Positions 401 to 428 (QEEDAKNQGEGDCKQQQGTSEKSKKGKD) are disordered. Residues 403–413 (EDAKNQGEGDC) show a composition bias toward basic and acidic residues. A helical membrane pass occupies residues 480 to 500 (TGMVASGALGVAINAAEGVYV).

Its subcellular location is the cell membrane. Functionally, may be an adherent factor for rickettsial adsorption to the host-cell surface and a determinant of virulence of individual rickettsial strain. It is the major outer membrane protein. This Orientia tsutsugamushi (Rickettsia tsutsugamushi) protein is 56 kDa type-specific antigen.